The chain runs to 579 residues: Probable serine/threonine-protein kinase kinY (579 aa).

Residues methionine 1 to serine 24 form a disordered region. In terms of domain architecture, Protein kinase spans leucine 32–phenylalanine 309. ATP-binding positions include isoleucine 38–valine 46 and lysine 59. Catalysis depends on aspartate 167, which acts as the Proton acceptor.

It belongs to the protein kinase superfamily. TKL Ser/Thr protein kinase family.

It carries out the reaction L-seryl-[protein] + ATP = O-phospho-L-seryl-[protein] + ADP + H(+). It catalyses the reaction L-threonyl-[protein] + ATP = O-phospho-L-threonyl-[protein] + ADP + H(+). This is Probable serine/threonine-protein kinase kinY (kinY) from Dictyostelium discoideum (Social amoeba).